Here is a 683-residue protein sequence, read N- to C-terminus: Outer dynein arm-docking complex subunit 4 (683 aa).

4 TPR repeats span residues F13–D46, K47–F80, N48–F80, and C81–R114. The interval Q158 to G179 is disordered. The segment covering L167 to G179 has biased composition (basic residues). 5 TPR repeats span residues L275 to E311, G320 to Y353, S360 to T393, T397 to E430, and L437 to V470. Disordered regions lie at residues E510–V537 and V553–E683. Basic and acidic residues-rich tracts occupy residues T521–V537, P566–P590, G602–E620, and S629–D675. Residues D592–L625 form a TPR 15 repeat.

As to quaternary structure, component of the outer dynein arm-docking complex along with ODAD1, ODAD2 and ODAD3. Interacts with ODAD1; this interaction may facilitate the recruitment and/or attachment of outer dynein arm docking complex proteins, including ODAD1, ODAD3 and ODAD2, to ciliary axonemes. Interacts with components of the IFT complex A, including IFT140, TTC21B/IFT139 and WDR19/IFT144, and the IFT complex B, including IFT46, IFT52 and IFT57. Interacts with CFAP53. Expressed in trachea multiciliated cells.

Its subcellular location is the cytoplasm. It is found in the cytoskeleton. It localises to the cilium axoneme. Functionally, component of the outer dynein arm-docking complex (ODA-DC) that mediates outer dynein arms (ODA) binding onto the doublet microtubule. Plays an essential role for the assembly of ODA-DC and for the docking of ODA in ciliary axoneme. The sequence is that of Outer dynein arm-docking complex subunit 4 from Bos taurus (Bovine).